We begin with the raw amino-acid sequence, 167 residues long: Homeobox protein EgHBX3 (167 aa).

Positions 80-139 (SQSKRRVLFNKFQISQLEKRLKQRYLTAQERQELAHTIGLTPTQVKIWFQNHAYKMKRLF) form a DNA-binding region, homeobox.

It belongs to the NK-2 homeobox family.

The protein resides in the nucleus. In Echinococcus granulosus (Hydatid tapeworm), this protein is Homeobox protein EgHBX3 (HBX3).